We begin with the raw amino-acid sequence, 315 residues long: Transcription factor MafAa (315 aa).

The span at 52 to 104 (STPISTPCSSVPSSPSFCAPSPGSQPGQNLVNGVNNNNNNSGNGNNNTQGSSG) shows a compositional bias: low complexity. Disordered regions lie at residues 52–108 (STPI…KPQM) and 169–191 (ATNGHHHPVHHHHHHHGHHAHAR). The span at 172-189 (GHHHPVHHHHHHHGHHAH) shows a compositional bias: basic residues. The interval 223–248 (RLKQKRRTLKNRGYAQSCRYKRVQQR) is basic motif. A bZIP domain is found at 223 to 286 (RLKQKRRTLK…DLYKEKYEKL (64 aa)). Residues 229–243 (RTLKNRGYAQSCRYK) form an interaction with DNA region. Residues 251 to 272 (LESEKCTLQSQVEQLKQDVARL) form a leucine-zipper region. The segment at 290–315 (AFNGGGNTRDPSSGNHVKTTSTDFFM) is disordered. Over residues 298-315 (RDPSSGNHVKTTSTDFFM) the composition is skewed to polar residues.

It belongs to the bZIP family. Maf subfamily.

The protein resides in the nucleus. Functionally, transcription factor, possibly involved in transcription regulation during lens development, including that of crystallin genes. Specifically binds to the alphaCE2 enhancer element of crystallin gene. The polypeptide is Transcription factor MafAa (mafaa) (Danio rerio (Zebrafish)).